The sequence spans 575 residues: uncharacterized protein (575 aa).

Transmembrane regions (helical) follow at residues 16-36 (FFLDFFSAIAGGLMELSFPLI), 50-70 (WGLIIATSIGLFAVYALSSAL), 132-152 (PEDLFIAVMTILGAFGVMLFI), 154-174 (WQLALLTFIIMPIVIWLALYF), 243-263 (ISYMLTRFVTLFVLLCGTWFV), and 264-284 (IRGSLSYGEFVAFVLLTNVLF). One can recognise an ABC transmembrane type-1 domain in the interval 16–299 (FFLDFFSAIA…INAIIEMYPR (284 aa)). One can recognise an ABC transporter domain in the interval 333–567 (IRYKHVSFGY…GGLYSRLHQA (235 aa)). 366–373 (GPSGAGKS) provides a ligand contact to ATP.

Belongs to the ABC transporter superfamily.

The protein resides in the cell membrane. Its subcellular location is the membrane raft. This is an uncharacterized protein from Bacillus subtilis (strain 168).